The following is a 101-amino-acid chain: Aspartyl/glutamyl-tRNA(Asn/Gln) amidotransferase subunit C (101 aa).

Belongs to the GatC family. Heterotrimer of A, B and C subunits.

It catalyses the reaction L-glutamyl-tRNA(Gln) + L-glutamine + ATP + H2O = L-glutaminyl-tRNA(Gln) + L-glutamate + ADP + phosphate + H(+). It carries out the reaction L-aspartyl-tRNA(Asn) + L-glutamine + ATP + H2O = L-asparaginyl-tRNA(Asn) + L-glutamate + ADP + phosphate + 2 H(+). Functionally, allows the formation of correctly charged Asn-tRNA(Asn) or Gln-tRNA(Gln) through the transamidation of misacylated Asp-tRNA(Asn) or Glu-tRNA(Gln) in organisms which lack either or both of asparaginyl-tRNA or glutaminyl-tRNA synthetases. The reaction takes place in the presence of glutamine and ATP through an activated phospho-Asp-tRNA(Asn) or phospho-Glu-tRNA(Gln). The polypeptide is Aspartyl/glutamyl-tRNA(Asn/Gln) amidotransferase subunit C (Lactococcus lactis subsp. cremoris (strain SK11)).